A 515-amino-acid polypeptide reads, in one-letter code: Maturase K (515 aa).

Belongs to the intron maturase 2 family. MatK subfamily.

It localises to the plastid. It is found in the chloroplast. Functionally, usually encoded in the trnK tRNA gene intron. Probably assists in splicing its own and other chloroplast group II introns. This is Maturase K from Pinus tabuliformis (Chinese red pine).